Consider the following 395-residue polypeptide: Tyrosine--tRNA ligase 2 (395 aa).

The 'HIGH' region motif lies at 42 to 51 (PTAPDIHLGH). Residues 226 to 230 (KMSKS) carry the 'KMSKS' region motif. Residue Lys229 coordinates ATP. The region spanning 334 to 394 (TPVANLLKDA…GKRKFARITI (61 aa)) is the S4 RNA-binding domain.

This sequence belongs to the class-I aminoacyl-tRNA synthetase family. TyrS type 2 subfamily. In terms of assembly, homodimer.

Its subcellular location is the cytoplasm. The catalysed reaction is tRNA(Tyr) + L-tyrosine + ATP = L-tyrosyl-tRNA(Tyr) + AMP + diphosphate + H(+). Functionally, catalyzes the attachment of tyrosine to tRNA(Tyr) in a two-step reaction: tyrosine is first activated by ATP to form Tyr-AMP and then transferred to the acceptor end of tRNA(Tyr). This is Tyrosine--tRNA ligase 2 from Vibrio parahaemolyticus serotype O3:K6 (strain RIMD 2210633).